The following is a 513-amino-acid chain: MEDRRESELKVFCSKNILSILGFSCIIAVIALLALGLTQNKALPENVKFGIVLDAGSSHTSLYIYRWPAEKENDTGVVTQIEESNVKGPGISGFAKKVNEINVYLTACMERAQKVIPSIQHMETPVYLGATAGMRLLRMENKQMADKILAAVASSISEYPFDFQGARIISGQEEGAYGWITVNYLLGKFTQKLSWFNLKPSKDDTQETYGALDLGGASTQITFVPQNETTESPNNNLYFRLYGKNYSVYTHSFLCYGKDQALLQKLALGLQGTNGIIHEPCFHSRYMRKIKMSVLNEGFCTKRHELNSSFYPLVDIEIRGAGNFQRCRQSIIQLFNTSYCPYSSCSFNGVFLPPLHGQFGAFSAFYYVMEFLNLTSEESVSVEQLTEKLEEFCAQRWEEVQKNFGEVKEKYLSEYCFSGTYILVLLLNGYHFTAESWKNIHFMNKVRSTDVGWTLGYMLNLTNKIPAEEPMSPPLPHSTYVFLMVLFSLILLAVIIVGIVVFHKPSYFWKDMV.

The Cytoplasmic segment spans residues 1-16 (MEDRRESELKVFCSKN). Residues 17-37 (ILSILGFSCIIAVIALLALGL) form a helical membrane-spanning segment. Topologically, residues 38–481 (TQNKALPENV…SPPLPHSTYV (444 aa)) are extracellular. Asn-73 carries an N-linked (GlcNAc...) asparagine glycan. Glu-174 functions as the Proton acceptor in the catalytic mechanism. Residues Asn-227 and Asn-245 are each glycosylated (N-linked (GlcNAc...) asparagine). 2 cysteine pairs are disulfide-bonded: Cys-255–Cys-300 and Cys-281–Cys-327. 2 N-linked (GlcNAc...) asparagine glycosylation sites follow: Asn-307 and Asn-336. A disulfide bridge connects residues Cys-340 and Cys-345. N-linked (GlcNAc...) asparagine glycosylation is present at Asn-373. A disulfide bridge connects residues Cys-393 and Cys-416. Asn-460 is a glycosylation site (N-linked (GlcNAc...) asparagine). A helical membrane pass occupies residues 482-502 (FLMVLFSLILLAVIIVGIVVF). Over 503 to 513 (HKPSYFWKDMV) the chain is Cytoplasmic.

This sequence belongs to the GDA1/CD39 NTPase family. Homodimer; disulfide-linked. Requires Ca(2+) as cofactor. Mg(2+) serves as cofactor. N-glycosylated. In terms of processing, the N-terminus is blocked. Post-translationally, palmitoylated on Cys-13; which is required for caveola targeting.

The protein localises to the membrane. It localises to the caveola. The catalysed reaction is a ribonucleoside 5'-triphosphate + 2 H2O = a ribonucleoside 5'-phosphate + 2 phosphate + 2 H(+). It catalyses the reaction a ribonucleoside 5'-triphosphate + H2O = a ribonucleoside 5'-diphosphate + phosphate + H(+). It carries out the reaction a ribonucleoside 5'-diphosphate + H2O = a ribonucleoside 5'-phosphate + phosphate + H(+). The enzyme catalyses ATP + 2 H2O = AMP + 2 phosphate + 2 H(+). The catalysed reaction is ATP + H2O = ADP + phosphate + H(+). It catalyses the reaction ADP + H2O = AMP + phosphate + H(+). It carries out the reaction CTP + 2 H2O = CMP + 2 phosphate + 2 H(+). The enzyme catalyses CTP + H2O = CDP + phosphate + H(+). The catalysed reaction is CDP + H2O = CMP + phosphate + H(+). It catalyses the reaction GTP + 2 H2O = GMP + 2 phosphate + 2 H(+). It carries out the reaction GTP + H2O = GDP + phosphate + H(+). The enzyme catalyses GDP + H2O = GMP + phosphate + H(+). The catalysed reaction is ITP + 2 H2O = IMP + 2 phosphate + 2 H(+). It catalyses the reaction ITP + H2O = IDP + phosphate + H(+). It carries out the reaction IDP + H2O = IMP + phosphate + H(+). The enzyme catalyses UTP + 2 H2O = UMP + 2 phosphate + 2 H(+). The catalysed reaction is UTP + H2O = UDP + phosphate + H(+). It catalyses the reaction UDP + H2O = UMP + phosphate + H(+). Catalyzes the hydrolysis of both di- and triphosphate nucleotides (NDPs and NTPs) and hydrolyze NTPs to nucleotide monophosphates (NMPs) in two distinct successive phosphate-releasing steps, with NDPs as intermediates and participates in the regulation of extracellular levels of nucleotides. By hydrolyzing proinflammatory ATP and platelet-activating ADP to AMP, it blocks platelet aggregation and supports blood flow. This is Ectonucleoside triphosphate diphosphohydrolase 1 from Bos taurus (Bovine).